The primary structure comprises 814 residues: Threonine--tRNA ligase 2, cytoplasmic (814 aa).

A coiled-coil region spans residues 2 to 72; the sequence is AAHIAQRLTV…SLREEQERAR (71 aa). The tract at residues 62–142 is disordered; the sequence is RSLREEQERA…GHKQEGPCAP (81 aa). Basic and acidic residues-rich tracts occupy residues 63 to 72, 88 to 102, and 119 to 137; these read SLREEQERAR, EEPK…EKGQ, and GNKK…HKQE. In terms of domain architecture, TGS spans 172–234; the sequence is KPIKITLADG…EQDSNVELLK (63 aa). Positions 798–804 match the Nuclear localization signal motif; the sequence is KLKTLKK.

This sequence belongs to the class-II aminoacyl-tRNA synthetase family.

The protein localises to the cytoplasm. Its subcellular location is the nucleus. It carries out the reaction tRNA(Thr) + L-threonine + ATP = L-threonyl-tRNA(Thr) + AMP + diphosphate + H(+). Catalyzes the attachment of threonine to tRNA(Thr) in a two-step reaction: threonine is first activated by ATP to form Thr-AMP and then transferred to the acceptor end of tRNA(Thr). Also edits incorrectly charged tRNA(Thr) via its editing domain, at the post-transfer stage. This Xenopus tropicalis (Western clawed frog) protein is Threonine--tRNA ligase 2, cytoplasmic (tars3).